Consider the following 711-residue polypeptide: Ferric/cupric reductase transmembrane component 2 (711 aa).

A signal peptide spans 1 to 23; the sequence is MHWTSILSAILLFCLSGARASPA. At 24-164 the chain is on the extracellular side; it reads KTVIRNKVPL…GFYANLDVGN (141 aa). Residues asparagine 85, asparagine 108, asparagine 120, and asparagine 134 are each glycosylated (N-linked (GlcNAc...) asparagine). Residues 165 to 185 traverse the membrane as a helical segment; that stretch reads IYGGIICAYFVAIMAFAGVLH. Topologically, residues 186-235 are cytoplasmic; that stretch reads CMNYTPFKTVLLKQKLVGYVRGYLTLPTIGSKHASDFSYFRIFTGYLPTR. Residues 236-256 form a helical membrane-spanning segment; sequence LEGIIILGYLVLHTVFLAYGY. The Extracellular portion of the chain corresponds to 257 to 280; sequence EYDPENIIFKSRRVQVARYVADRS. In terms of domain architecture, Ferric oxidoreductase spans 280–414; it reads SGVLAFAHFP…SGIEWIYTAI (135 aa). The chain crosses the membrane as a helical span at residues 281-301; sequence GVLAFAHFPLIVLFAGRNNFL. Residues 302–317 are Cytoplasmic-facing; that stretch reads EYISGVKYTSFIMFHK. Residues histidine 316 and histidine 330 each contribute to the heme site. Residues 318 to 340 form a helical membrane-spanning segment; it reads WLGRMMFLDAMIHGSAYTSYTVA. An N-linked (GlcNAc...) asparagine glycan is attached at asparagine 341. Residues 341 to 353 are Extracellular-facing; the sequence is NKTWATSKNRLYW. Residues 354-374 form a helical membrane-spanning segment; that stretch reads QFGVAALCLAGTMVFFSFAVF. The Cytoplasmic segment spans residues 375–377; it reads RKY. The helical transmembrane segment at 378-398 threads the bilayer; that stretch reads FYEAFLFLHIVLGAMFFYACW. Heme-binding residues include histidine 386 and histidine 400. Over 399–400 the chain is Extracellular; sequence EH. A helical membrane pass occupies residues 401–423; sequence VVSLSGIEWIYTAIAIWIVDRII. The FAD-binding FR-type domain maps to 415–534; sequence AIWIVDRIIR…EGPYGSSSPV (120 aa). Over 424-711 the chain is Cytoplasmic; that stretch reads RIIKASYFGF…IEYFEEYQCW (288 aa). 479-485 is an FAD binding site; that stretch reads HPFTVLD. NADP(+) is bound by residues 526-529 and 677-678; these read GPYG and CG.

The protein belongs to the ferric reductase (FRE) family. The cofactor is FAD. Heme is required as a cofactor.

The protein resides in the cell membrane. The catalysed reaction is 2 a Fe(II)-siderophore + NADP(+) + H(+) = 2 a Fe(III)-siderophore + NADPH. Its function is as follows. Metalloreductase responsible for reducing extracellular iron and copper prior to import. Catalyzes the reductive uptake of Fe(3+)-salts and Fe(3+) bound to catecholate or hydroxamate siderophores. Fe(3+) is reduced to Fe(2+), which then dissociates from the siderophore and can be imported by the high-affinity Fe(2+) transport complex in the plasma membrane. Also participates in Cu(2+) reduction and Cu(+) uptake. In Saccharomyces cerevisiae (strain ATCC 204508 / S288c) (Baker's yeast), this protein is Ferric/cupric reductase transmembrane component 2 (FRE2).